The primary structure comprises 176 residues: MLRIARVSHNAVKMASSRGIHFSSDGFIKMKDQKHILKVMNSPENQWSTDELLSHSDHSSDEITSETLQKVSKKLAPIFKSAALPMPDSDETMFSLIKTLRTQVNLVSHIHDIDVSGVAPLTCLTPIKDFTYEQLTAEDSGEPGPEVLWDALSCAEKKDGRFFVVSRDIKQEEPTQ.

The protein belongs to the GatF family. As to quaternary structure, subunit of the heterotrimeric GatFAB amidotransferase (AdT) complex, composed of A, B and F subunits.

It is found in the mitochondrion inner membrane. It carries out the reaction L-glutamyl-tRNA(Gln) + L-glutamine + ATP + H2O = L-glutaminyl-tRNA(Gln) + L-glutamate + ADP + phosphate + H(+). Functionally, allows the formation of correctly charged Gln-tRNA(Gln) through the transamidation of misacylated Glu-tRNA(Gln) in the mitochondria. The reaction takes place in the presence of glutamine and ATP through an activated gamma-phospho-Glu-tRNA(Gln). Required for proper protein synthesis within the mitochondrion. The sequence is that of Glutamyl-tRNA(Gln) amidotransferase subunit F, mitochondrial from Yarrowia lipolytica (strain CLIB 122 / E 150) (Yeast).